The following is a 640-amino-acid chain: Epithelial sodium channel subunit beta (640 aa).

Topologically, residues Met1–Ala50 are cytoplasmic. Residues Met51 to Ile71 traverse the membrane as a helical segment. Over Arg72–Gly532 the chain is Extracellular. 9 disulfides stabilise this stretch: Cys98-Cys272, Cys184-Cys189, Cys196-Cys203, Cys249-Cys256, Cys361-Cys448, Cys386-Cys444, Cys390-Cys440, Cys399-Cys426, and Cys401-Cys415. Residue Asn260 is glycosylated (N-linked (GlcNAc...) asparagine). A helical membrane pass occupies residues Ser533–Ile553. At Lys554–Ile640 the chain is on the cytoplasmic side. A disordered region spans residues Phe590–Ile640. The short motif at Pro616–Tyr620 is the PY motif; recruits WW domain-containing proteins and is thereby required for ubiquitination and inhibition of the channel by NEDD4 and NEDD4L element. The segment covering Ile631–Ile640 has biased composition (acidic residues). Residues Ser633 and Ser635 each carry the phosphoserine modification.

The protein belongs to the amiloride-sensitive sodium channel (TC 1.A.6) family. SCNN1B subfamily. In terms of assembly, component of the heterotrimeric epithelial sodium channel (ENaC) composed of an alpha/SCNN1A, a beta/SCNN1B and a gamma/SCNN1G subunit. An additional delta/SCNN1D subunit can replace the alpha/SCNN1A subunit to form an alternative channel with specific properties. Interacts with WWP1 (via WW domains). Interacts with WWP2 (via WW domains); inhibits the channel. Interacts with the full-length immature form of PCSK9 (pro-PCSK9); inhibits ENaC by promoting its proteasomal degradation. Interacts (N-glycosylated) with BPIFA1; the interaction is direct and inhibits the proteolytic processing of SCNN1A and SCNN1G and the activation of ENaC. In terms of processing, ubiquitinated. Can be ubiquitinated at multiple sites and undergo monoubiquitination and polyubiquitination. Ubiquitination by NEDD4 or NEDD4L inhibits the ENaC channel through endocytosis, intracellular retention and degradation of its individual subunits. However, some studies could not confirm the ubiquitination of this subunit of the ENaC. Post-translationally, phosphorylated on serine and threonine residues. Aldosterone and insulin increase the basal level of phosphorylation. N-glycosylated. N-glycosylation is required for interaction with BPIFA1. As to expression, detected in placenta, lung and kidney. Expressed in kidney (at protein level).

The protein localises to the apical cell membrane. Its subcellular location is the cytoplasmic vesicle membrane. It catalyses the reaction Na(+)(in) = Na(+)(out). Originally identified and characterized by its inhibition by the diuretic drug amiloride. Functionally, this is one of the three pore-forming subunits of the heterotrimeric epithelial sodium channel (ENaC), a critical regulator of sodium balance and fluid homeostasis. ENaC operates in epithelial tissues, where it mediates the electrodiffusion of sodium ions from extracellular fluid through the apical membrane of cells, with water following osmotically. It plays a key role in maintaining sodium homeostasis through electrogenic sodium reabsorption in the kidneys. Additionally, ENaC is essential for airway surface liquid homeostasis, which is crucial for proper mucus clearance. The polypeptide is Epithelial sodium channel subunit beta (Homo sapiens (Human)).